The following is a 453-amino-acid chain: Ubiquitin-associated protein 1 (453 aa).

The 47-residue stretch at 19-65 (LDDVPFKLNEKFRCPSKVGLPIGFCLSDCNAILSDLQYDFNLERRTV) folds into the UMA domain. The span at 83 to 93 (EAIRTDSESER) shows a compositional bias: basic and acidic residues. 3 disordered regions span residues 83–119 (EAIR…QDIV), 189–223 (LQSQ…AKTG), and 260–335 (FPKL…AGTT). Low complexity predominate over residues 189-199 (LQSQPQSSVSP). Polar residues predominate over residues 285-328 (NLSNGTPPSLQRTASNNNTTLPQEQPVFAQNGTPKQSNPVTVTS). UBA domains are found at residues 340 to 381 (SPSE…LFTH) and 403 to 449 (GSEE…LMTR).

In terms of assembly, component of an ESCRT-I complex (endosomal sorting complex required for transport I).

Its subcellular location is the cytoplasm. It localises to the cytosol. It is found in the endosome. Component of the ESCRT-I complex, a regulator of vesicular trafficking process. Binds to ubiquitinated cargo proteins and is required for the sorting of endocytic ubiquitinated cargos into multivesicular bodies (MVBs). This is Ubiquitin-associated protein 1 from Danio rerio (Zebrafish).